The sequence spans 205 residues: Protein N-terminal glutamine amidohydrolase (205 aa).

Catalysis depends on residues C20, H74, and D90.

The protein belongs to the NTAQ1 family. Monomer.

It catalyses the reaction N-terminal L-glutaminyl-[protein] + H2O = N-terminal L-glutamyl-[protein] + NH4(+). Functionally, mediates the side-chain deamidation of N-terminal glutamine residues to glutamate, an important step in N-end rule pathway of protein degradation. Conversion of the resulting N-terminal glutamine to glutamate renders the protein susceptible to arginylation, polyubiquitination and degradation as specified by the N-end rule. Does not act on substrates with internal or C-terminal glutamine and does not act on non-glutamine residues in any position. The protein is Protein N-terminal glutamine amidohydrolase (tun) of Drosophila ananassae (Fruit fly).